Reading from the N-terminus, the 340-residue chain is Beta-ketoacyl-[acyl-carrier-protein] synthase III (340 aa).

Active-site residues include C122 and H260. The ACP-binding stretch occupies residues 261–265 (QANTR). N291 is an active-site residue.

The protein belongs to the thiolase-like superfamily. FabH family. In terms of assembly, homodimer.

It is found in the cytoplasm. It catalyses the reaction malonyl-[ACP] + acetyl-CoA + H(+) = 3-oxobutanoyl-[ACP] + CO2 + CoA. The protein operates within lipid metabolism; fatty acid biosynthesis. Its function is as follows. Catalyzes the condensation reaction of fatty acid synthesis by the addition to an acyl acceptor of two carbons from malonyl-ACP. Catalyzes the first condensation reaction which initiates fatty acid synthesis and may therefore play a role in governing the total rate of fatty acid production. Possesses both acetoacetyl-ACP synthase and acetyl transacylase activities. Its substrate specificity determines the biosynthesis of branched-chain and/or straight-chain of fatty acids. This is Beta-ketoacyl-[acyl-carrier-protein] synthase III from Mycobacteroides abscessus (strain ATCC 19977 / DSM 44196 / CCUG 20993 / CIP 104536 / JCM 13569 / NCTC 13031 / TMC 1543 / L948) (Mycobacterium abscessus).